Here is a 219-residue protein sequence, read N- to C-terminus: Cytidylate kinase (219 aa).

Gly-21 to Thr-29 lines the ATP pocket.

This sequence belongs to the cytidylate kinase family. Type 1 subfamily.

Its subcellular location is the cytoplasm. It carries out the reaction CMP + ATP = CDP + ADP. The catalysed reaction is dCMP + ATP = dCDP + ADP. The protein is Cytidylate kinase of Rickettsia africae (strain ESF-5).